The following is a 1142-amino-acid chain: Serine/threonine-protein kinase GIN4 (1142 aa).

The region spanning 19–289 is the Protein kinase domain; sequence WKLGETLGLG…TRDILKHPLL (271 aa). ATP is bound by residues 25–33 and Lys-48; that span reads LGLGSTGKV. The Proton acceptor role is filled by Asp-156. 2 disordered regions span residues 378 to 412 and 425 to 469; these read KKRQSISSVSVSPSKKVSTTPQRRRNRESLISVTS and ASSA…RNKR. Residues 382 to 395 are compositionally biased toward low complexity; that stretch reads SISSVSVSPSKKVS. Ser-406 is subject to Phosphoserine. The segment covering 425 to 440 has biased composition (low complexity); that stretch reads ASSASSSNLTTPGSSK. Positions 441–452 are enriched in basic residues; the sequence is RLSKNFSSKKKL. Positions 454–465 are enriched in polar residues; it reads TIVNQSSPTPAS. Phosphoserine occurs at positions 465, 471, 617, 689, 719, 805, 807, and 883. A disordered region spans residues 676–698; sequence DPGIMFSSPTEEVSPVEPKRTEN. Thr-884 bears the Phosphothreonine mark. Residues 903–1031 form a disordered region; it reads NEAKQTDNLH…NTAIGNGSFF (129 aa). 3 stretches are compositionally biased toward basic and acidic residues: residues 923–937, 962–984, and 996–1021; these read NELRKQNSQEGDQAH, KEEKKPEQHKQEEDQEKREKVVD, and KIREKNAGSQAKDHSKDHLKEHKQDK. Phosphoserine is present on Ser-930.

It belongs to the protein kinase superfamily. CAMK Ser/Thr protein kinase family. NIM1 subfamily. As to quaternary structure, component of the GIN4 complex composed of at least BNI5, CDC3, CDC10, CDC11, CDC12, GIN4, NAP1 and SHS1 which forms a ring at the bud neck.

Its subcellular location is the cytoplasm. The protein localises to the bud neck. It carries out the reaction L-seryl-[protein] + ATP = O-phospho-L-seryl-[protein] + ADP + H(+). The enzyme catalyses L-threonyl-[protein] + ATP = O-phospho-L-threonyl-[protein] + ADP + H(+). Functionally, serine/threonine-protein kinase which regulates the localization and the function of the septins during mitosis. Phosphorylates SHS1. In Saccharomyces cerevisiae (strain ATCC 204508 / S288c) (Baker's yeast), this protein is Serine/threonine-protein kinase GIN4 (GIN4).